A 327-amino-acid chain; its full sequence is Tagatose 1,6-diphosphate aldolase 2 (327 aa).

This sequence belongs to the aldolase LacD family.

The catalysed reaction is D-tagatofuranose 1,6-bisphosphate = D-glyceraldehyde 3-phosphate + dihydroxyacetone phosphate. It functions in the pathway carbohydrate metabolism; D-tagatose 6-phosphate degradation; D-glyceraldehyde 3-phosphate and glycerone phosphate from D-tagatose 6-phosphate: step 2/2. The chain is Tagatose 1,6-diphosphate aldolase 2 (lacD2) from Streptococcus pyogenes serotype M3 (strain ATCC BAA-595 / MGAS315).